The chain runs to 472 residues: ATP synthase subunit beta (472 aa).

An ATP-binding site is contributed by 160 to 167; that stretch reads GGAGVGKT.

It belongs to the ATPase alpha/beta chains family. In terms of assembly, F-type ATPases have 2 components, CF(1) - the catalytic core - and CF(0) - the membrane proton channel. CF(1) has five subunits: alpha(3), beta(3), gamma(1), delta(1), epsilon(1). CF(0) has three main subunits: a(1), b(2) and c(9-12). The alpha and beta chains form an alternating ring which encloses part of the gamma chain. CF(1) is attached to CF(0) by a central stalk formed by the gamma and epsilon chains, while a peripheral stalk is formed by the delta and b chains.

Its subcellular location is the cell membrane. It catalyses the reaction ATP + H2O + 4 H(+)(in) = ADP + phosphate + 5 H(+)(out). Its function is as follows. Produces ATP from ADP in the presence of a proton gradient across the membrane. The catalytic sites are hosted primarily by the beta subunits. The sequence is that of ATP synthase subunit beta from Lachnoclostridium phytofermentans (strain ATCC 700394 / DSM 18823 / ISDg) (Clostridium phytofermentans).